A 200-amino-acid polypeptide reads, in one-letter code: Recombination protein RecR (200 aa).

The C4-type zinc finger occupies 59-74 (CSVCGSLDTSDPCAIC). Residues 82 to 177 (RLLCVVEEVG…SVTMLARGVP (96 aa)) form the Toprim domain.

It belongs to the RecR family.

Its function is as follows. May play a role in DNA repair. It seems to be involved in an RecBC-independent recombinational process of DNA repair. It may act with RecF and RecO. In Caulobacter sp. (strain K31), this protein is Recombination protein RecR.